The primary structure comprises 695 residues: Elongation factor G (695 aa).

A tr-type G domain is found at 12-286 (DKLRNIGIMA…AVIDYLPSPL (275 aa)). GTP is bound by residues 21 to 28 (AHIDAGKT), 85 to 89 (DTPGH), and 139 to 142 (NKMD).

The protein belongs to the TRAFAC class translation factor GTPase superfamily. Classic translation factor GTPase family. EF-G/EF-2 subfamily.

The protein resides in the cytoplasm. In terms of biological role, catalyzes the GTP-dependent ribosomal translocation step during translation elongation. During this step, the ribosome changes from the pre-translocational (PRE) to the post-translocational (POST) state as the newly formed A-site-bound peptidyl-tRNA and P-site-bound deacylated tRNA move to the P and E sites, respectively. Catalyzes the coordinated movement of the two tRNA molecules, the mRNA and conformational changes in the ribosome. This chain is Elongation factor G, found in Thermotoga petrophila (strain ATCC BAA-488 / DSM 13995 / JCM 10881 / RKU-1).